A 262-amino-acid polypeptide reads, in one-letter code: Tryptophan synthase alpha chain (262 aa).

Active-site proton acceptor residues include Glu-51 and Asp-62.

It belongs to the TrpA family. In terms of assembly, tetramer of two alpha and two beta chains.

The catalysed reaction is (1S,2R)-1-C-(indol-3-yl)glycerol 3-phosphate + L-serine = D-glyceraldehyde 3-phosphate + L-tryptophan + H2O. Its pathway is amino-acid biosynthesis; L-tryptophan biosynthesis; L-tryptophan from chorismate: step 5/5. The alpha subunit is responsible for the aldol cleavage of indoleglycerol phosphate to indole and glyceraldehyde 3-phosphate. The sequence is that of Tryptophan synthase alpha chain from Oceanobacillus iheyensis (strain DSM 14371 / CIP 107618 / JCM 11309 / KCTC 3954 / HTE831).